The primary structure comprises 23 residues: Alpha-amanitin proprotein (23 aa).

Residue Ile1 is modified to (3R,4R)-4,5-dihydroxyisoleucine; in form alpha-amanitin. Residue Ile1 is modified to (3R,4S)-4-hydroxyisoleucine; in form gamma-amanitin. The cyclopeptide (Ile-Pro) cross-link spans Ile1–Pro8. Residues Trp2–Cys6 constitute a cross-link (2'-cysteinyl-6'-hydroxytryptophan sulfoxide (Trp-Cys)). Pro8 carries the 4-hydroxyproline modification. Residues Cys9–Ala23 constitute a propeptide that is removed on maturation.

The protein belongs to the MSDIN fungal toxin family. In terms of processing, processed by the macrocyclase-peptidase enzyme POPB to yield a toxic cyclic decapeptide. POPB first removes 10 residues from the N-terminus. Conformational trapping of the remaining peptide forces the enzyme to release this intermediate rather than proceed to macrocyclization. The enzyme rebinds the remaining peptide in a different conformation and catalyzes macrocyclization of the N-terminal 8 residues.

In terms of biological role, major toxin belonging to the bicyclic octapeptides amatoxins that acts by binding non-competitively to RNA polymerase II and greatly slowing the elongation of transcripts from target promoters. This is Alpha-amanitin proprotein from Amanita fuligineoides.